Here is a 259-residue protein sequence, read N- to C-terminus: Small ribosomal subunit protein eS1 (259 aa).

A compositionally biased stretch (basic residues) spans 1 to 18 (MAVGKNKRISKGKKGGKK). Positions 1 to 22 (MAVGKNKRISKGKKGGKKKASD) are disordered.

The protein belongs to the eukaryotic ribosomal protein eS1 family. Component of the small ribosomal subunit. Mature ribosomes consist of a small (40S) and a large (60S) subunit. The 40S subunit contains about 33 different proteins and 1 molecule of RNA (18S). The 60S subunit contains about 49 different proteins and 3 molecules of RNA (25S, 5.8S and 5S).

The protein resides in the cytoplasm. The protein is Small ribosomal subunit protein eS1 of Chlamydomonas reinhardtii (Chlamydomonas smithii).